Reading from the N-terminus, the 721-residue chain is Probable acyl-activating enzyme 17, peroxisomal (721 aa).

The Microbody targeting signal signature appears at 719-721; that stretch reads SKL.

The protein belongs to the ATP-dependent AMP-binding enzyme family. As to expression, expressed in leaves, stems and developing seeds.

It is found in the peroxisome. Its function is as follows. May act as an acid--thiol ligase that activates carboxylic acids by forming acyl-CoAs. The protein is Probable acyl-activating enzyme 17, peroxisomal (AAE17) of Arabidopsis thaliana (Mouse-ear cress).